The primary structure comprises 1009 residues: UvrABC system protein A (1009 aa).

32-39 (GLSGSGKS) contributes to the ATP binding site. ABC transporter domains follow at residues 314–592 (WSHG…AESQ) and 612–941 (RDPS…KFLR). 645–652 (GVSGSGKS) serves as a coordination point for ATP. The segment at 744-770 (CENCSGDGTIKIEMNFLPDVYVPCEVC) adopts a C4-type zinc-finger fold. Residues 956–1009 (KAPRKTAARKTAAAKSTTKKTATVRTTNNTATKKAAAVTKKTAPAKKTTRARKA) are disordered. Positions 964-997 (RKTAAAKSTTKKTATVRTTNNTATKKAAAVTKKT) are enriched in low complexity. Over residues 998–1009 (APAKKTTRARKA) the composition is skewed to basic residues.

Belongs to the ABC transporter superfamily. UvrA family. Forms a heterotetramer with UvrB during the search for lesions.

It localises to the cytoplasm. In terms of biological role, the UvrABC repair system catalyzes the recognition and processing of DNA lesions. UvrA is an ATPase and a DNA-binding protein. A damage recognition complex composed of 2 UvrA and 2 UvrB subunits scans DNA for abnormalities. When the presence of a lesion has been verified by UvrB, the UvrA molecules dissociate. The polypeptide is UvrABC system protein A (Streptomyces avermitilis (strain ATCC 31267 / DSM 46492 / JCM 5070 / NBRC 14893 / NCIMB 12804 / NRRL 8165 / MA-4680)).